The sequence spans 316 residues: Probable cell division protein WhiA (316 aa).

Residues 275–309 (TLKELGEMVESGKISKSGINHRLRKLDQIAEQLRN) constitute a DNA-binding region (H-T-H motif).

Belongs to the WhiA family.

Involved in cell division and chromosome segregation. The chain is Probable cell division protein WhiA from Bacillus pumilus (strain SAFR-032).